A 31-amino-acid polypeptide reads, in one-letter code: Cytochrome b6-f complex subunit 6 (31 aa).

The chain crosses the membrane as a helical span at residues 3–23 (ILISYFCFLLIFFLFTLILFF).

Belongs to the PetL family. In terms of assembly, the 4 large subunits of the cytochrome b6-f complex are cytochrome b6, subunit IV (17 kDa polypeptide, PetD), cytochrome f and the Rieske protein, while the 4 small subunits are PetG, PetL, PetM and PetN. The complex functions as a dimer.

The protein localises to the plastid. It localises to the chloroplast thylakoid membrane. Component of the cytochrome b6-f complex, which mediates electron transfer between photosystem II (PSII) and photosystem I (PSI), cyclic electron flow around PSI, and state transitions. PetL is important for photoautotrophic growth as well as for electron transfer efficiency and stability of the cytochrome b6-f complex. In Gnetum parvifolium (Small-leaved jointfir), this protein is Cytochrome b6-f complex subunit 6.